The chain runs to 137 residues: Protein Turandot X (137 aa).

An N-terminal signal peptide occupies residues 1 to 24; sequence MKVPVFQLSCLLCLIVCLLCSVKA.

This sequence belongs to the Turandot family.

Its subcellular location is the secreted. Functionally, a humoral factor that may play a role in stress tolerance. The protein is Protein Turandot X of Drosophila persimilis (Fruit fly).